A 477-amino-acid chain; its full sequence is Methylenetetrahydrofolate--tRNA-(uracil-5-)-methyltransferase TrmFO (477 aa).

15–20 (GAGLAG) serves as a coordination point for FAD.

It belongs to the MnmG family. TrmFO subfamily. The cofactor is FAD.

It localises to the cytoplasm. It catalyses the reaction uridine(54) in tRNA + (6R)-5,10-methylene-5,6,7,8-tetrahydrofolate + NADH + H(+) = 5-methyluridine(54) in tRNA + (6S)-5,6,7,8-tetrahydrofolate + NAD(+). The catalysed reaction is uridine(54) in tRNA + (6R)-5,10-methylene-5,6,7,8-tetrahydrofolate + NADPH + H(+) = 5-methyluridine(54) in tRNA + (6S)-5,6,7,8-tetrahydrofolate + NADP(+). Its function is as follows. Catalyzes the folate-dependent formation of 5-methyl-uridine at position 54 (M-5-U54) in all tRNAs. This is Methylenetetrahydrofolate--tRNA-(uracil-5-)-methyltransferase TrmFO from Nitrobacter winogradskyi (strain ATCC 25391 / DSM 10237 / CIP 104748 / NCIMB 11846 / Nb-255).